Here is a 187-residue protein sequence, read N- to C-terminus: NADH-quinone oxidoreductase subunit B (187 aa).

Residues C51, C52, C117, and C149 each contribute to the [4Fe-4S] cluster site.

This sequence belongs to the complex I 20 kDa subunit family. As to quaternary structure, NDH-1 is composed of 14 different subunits. Subunits NuoB, C, D, E, F, and G constitute the peripheral sector of the complex. It depends on [4Fe-4S] cluster as a cofactor.

Its subcellular location is the cell inner membrane. It carries out the reaction a quinone + NADH + 5 H(+)(in) = a quinol + NAD(+) + 4 H(+)(out). Functionally, NDH-1 shuttles electrons from NADH, via FMN and iron-sulfur (Fe-S) centers, to quinones in the respiratory chain. The immediate electron acceptor for the enzyme in this species is believed to be ubiquinone. Couples the redox reaction to proton translocation (for every two electrons transferred, four hydrogen ions are translocated across the cytoplasmic membrane), and thus conserves the redox energy in a proton gradient. The protein is NADH-quinone oxidoreductase subunit B of Nitratidesulfovibrio vulgaris (strain DSM 19637 / Miyazaki F) (Desulfovibrio vulgaris).